The primary structure comprises 321 residues: tRNA U34 carboxymethyltransferase (321 aa).

Carboxy-S-adenosyl-L-methionine is bound by residues Lys-90, Trp-104, Lys-109, Gly-129, 151 to 153, 180 to 181, Met-195, Tyr-199, and Arg-314; these read DPT and IE.

The protein belongs to the class I-like SAM-binding methyltransferase superfamily. CmoB family. In terms of assembly, homotetramer.

The catalysed reaction is carboxy-S-adenosyl-L-methionine + 5-hydroxyuridine(34) in tRNA = 5-carboxymethoxyuridine(34) in tRNA + S-adenosyl-L-homocysteine + H(+). In terms of biological role, catalyzes carboxymethyl transfer from carboxy-S-adenosyl-L-methionine (Cx-SAM) to 5-hydroxyuridine (ho5U) to form 5-carboxymethoxyuridine (cmo5U) at position 34 in tRNAs. This is tRNA U34 carboxymethyltransferase from Haemophilus influenzae (strain PittGG).